A 241-amino-acid chain; its full sequence is Methylosome subunit pICln (241 aa).

Positions 88–112 (EDKEAHMADQEEEESEDDDDDEEPI) are disordered. Over residues 97-112 (QEEEESEDDDDDEEPI) the composition is skewed to acidic residues.

It belongs to the pICln (TC 1.A.47) family. As to quaternary structure, component of the methylosome, a 20S complex containing at least clns1a/picln, prmt5/skb1 and wdr77/mep50; may mediate snrpd1 and snrpd3 methylation. Forms a 6S pICln-Sm complex composed of clns1a/picln, snrpd1, snrpd2, snrpe, snrpf and snrpg; ring-like structure where clns1a/pICln mimics additional Sm proteins and which is unable to assemble into the core snRNP.

The protein resides in the cytoplasm. Its subcellular location is the cytosol. It localises to the nucleus. It is found in the cytoskeleton. Its function is as follows. Involved in both the assembly of spliceosomal snRNPs and the methylation of Sm proteins. Chaperone that regulates the assembly of spliceosomal U1, U2, U4 and U5 small nuclear ribonucleoproteins (snRNPs), the building blocks of the spliceosome, and thereby plays an important role in the splicing of cellular pre-mRNAs. Most spliceosomal snRNPs contain a common set of Sm proteins SNRPB, SNRPD1, SNRPD2, SNRPD3, SNRPE, SNRPF and SNRPG that assemble in a heptameric protein ring on the Sm site of the small nuclear RNA to form the core snRNP (Sm core). In the cytosol, the Sm proteins SNRPD1, SNRPD2, SNRPE, SNRPF and SNRPG are trapped in an inactive 6S pICln-Sm complex by the chaperone CLNS1A that controls the assembly of the core snRNP. Dissociation by the SMN complex of CLNS1A from the trapped Sm proteins and their transfer to an SMN-Sm complex triggers the assembly of core snRNPs and their transport to the nucleus. The sequence is that of Methylosome subunit pICln (clns1a) from Xenopus laevis (African clawed frog).